The chain runs to 387 residues: Exodeoxyribonuclease 7 large subunit (387 aa).

It belongs to the XseA family. As to quaternary structure, heterooligomer composed of large and small subunits.

It is found in the cytoplasm. It carries out the reaction Exonucleolytic cleavage in either 5'- to 3'- or 3'- to 5'-direction to yield nucleoside 5'-phosphates.. Its function is as follows. Bidirectionally degrades single-stranded DNA into large acid-insoluble oligonucleotides, which are then degraded further into small acid-soluble oligonucleotides. The polypeptide is Exodeoxyribonuclease 7 large subunit (Campylobacter lari (strain RM2100 / D67 / ATCC BAA-1060)).